A 124-amino-acid chain; its full sequence is Large ribosomal subunit protein bL12 (124 aa).

This sequence belongs to the bacterial ribosomal protein bL12 family. As to quaternary structure, homodimer. Part of the ribosomal stalk of the 50S ribosomal subunit. Forms a multimeric L10(L12)X complex, where L10 forms an elongated spine to which 2 to 4 L12 dimers bind in a sequential fashion. Binds GTP-bound translation factors.

Its function is as follows. Forms part of the ribosomal stalk which helps the ribosome interact with GTP-bound translation factors. Is thus essential for accurate translation. This is Large ribosomal subunit protein bL12 from Ralstonia pickettii (strain 12J).